The chain runs to 449 residues: Putative glycosyltransferase 7 (449 aa).

The Cytoplasmic portion of the chain corresponds to 1 to 32 (MVSPETSSSHYQSSPMAKYAGTRTRPVVCISD). The chain crosses the membrane as a helical; Signal-anchor for type II membrane protein span at residues 33 to 53 (VVLFLGGAFMSLILVWSFFSF). Topologically, residues 54-449 (SSISPNLTVK…VPFDYPDEPW (396 aa)) are lumenal. Asparagine 59, asparagine 123, and asparagine 332 each carry an N-linked (GlcNAc...) asparagine glycan.

It belongs to the glycosyltransferase 34 family.

The protein resides in the golgi apparatus membrane. In terms of biological role, probable glycosyltransferase that may be involved in the biosynthesis of xyloglucan. The sequence is that of Putative glycosyltransferase 7 (GT7) from Arabidopsis thaliana (Mouse-ear cress).